A 350-amino-acid chain; its full sequence is Chorismate synthase (350 aa).

NADP(+) is bound by residues arginine 39 and arginine 45. Residues 119 to 121, 213 to 214, glycine 258, 273 to 277, and arginine 299 each bind FMN; these read RSS, QA, and KPIPT.

Belongs to the chorismate synthase family. As to quaternary structure, homotetramer. FMNH2 is required as a cofactor.

The catalysed reaction is 5-O-(1-carboxyvinyl)-3-phosphoshikimate = chorismate + phosphate. It participates in metabolic intermediate biosynthesis; chorismate biosynthesis; chorismate from D-erythrose 4-phosphate and phosphoenolpyruvate: step 7/7. Catalyzes the anti-1,4-elimination of the C-3 phosphate and the C-6 proR hydrogen from 5-enolpyruvylshikimate-3-phosphate (EPSP) to yield chorismate, which is the branch point compound that serves as the starting substrate for the three terminal pathways of aromatic amino acid biosynthesis. This reaction introduces a second double bond into the aromatic ring system. The protein is Chorismate synthase of Thermoanaerobacter pseudethanolicus (strain ATCC 33223 / 39E) (Clostridium thermohydrosulfuricum).